Consider the following 204-residue polypeptide: NADH-ubiquinone oxidoreductase subunit 9 (204 aa).

Belongs to the complex I 30 kDa subunit family. Complex I is composed of about 30 different subunits.

Its subcellular location is the mitochondrion inner membrane. It catalyses the reaction a ubiquinone + NADH + 5 H(+)(in) = a ubiquinol + NAD(+) + 4 H(+)(out). Functionally, core subunit of the mitochondrial membrane respiratory chain NADH dehydrogenase (Complex I) that is believed to belong to the minimal assembly required for catalysis. Complex I functions in the transfer of electrons from NADH to the respiratory chain. The immediate electron acceptor for the enzyme is believed to be ubiquinone. The sequence is that of NADH-ubiquinone oxidoreductase subunit 9 (NAD9) from Reclinomonas americana.